The primary structure comprises 109 residues: A-type ATP synthase subunit F (109 aa).

This sequence belongs to the V-ATPase F subunit family. Has multiple subunits with at least A(3), B(3), C, D, E, F, H, I and proteolipid K(x).

It localises to the cell membrane. Functionally, component of the A-type ATP synthase that produces ATP from ADP in the presence of a proton gradient across the membrane. This is A-type ATP synthase subunit F from Haloquadratum walsbyi (strain DSM 16790 / HBSQ001).